Here is a 502-residue protein sequence, read N- to C-terminus: Glycerol kinase (502 aa).

An ADP-binding site is contributed by Thr14. Positions 14, 15, and 16 each coordinate ATP. Residue Thr14 coordinates sn-glycerol 3-phosphate. ADP is bound at residue Arg18. Arg84, Glu85, Tyr136, and Asp246 together coordinate sn-glycerol 3-phosphate. Positions 84, 85, 136, 246, and 247 each coordinate glycerol. 2 residues coordinate ADP: Thr268 and Gly311. ATP is bound by residues Thr268, Gly311, Gln315, and Gly412. The ADP site is built by Gly412 and Asn416.

This sequence belongs to the FGGY kinase family. As to quaternary structure, homotetramer and homodimer (in equilibrium). Heterodimer with EIIA-Glc. Binds 1 zinc ion per glycerol kinase EIIA-Glc dimer. The zinc ion is important for dimerization.

It carries out the reaction glycerol + ATP = sn-glycerol 3-phosphate + ADP + H(+). The protein operates within polyol metabolism; glycerol degradation via glycerol kinase pathway; sn-glycerol 3-phosphate from glycerol: step 1/1. With respect to regulation, activity of this regulatory enzyme is affected by several metabolites. Allosterically and non-competitively inhibited by fructose 1,6-bisphosphate (FBP) and unphosphorylated phosphocarrier protein EIIA-Glc (III-Glc), an integral component of the bacterial phosphotransferase (PTS) system. In terms of biological role, key enzyme in the regulation of glycerol uptake and metabolism. Catalyzes the phosphorylation of glycerol to yield sn-glycerol 3-phosphate. In Salmonella arizonae (strain ATCC BAA-731 / CDC346-86 / RSK2980), this protein is Glycerol kinase.